We begin with the raw amino-acid sequence, 391 residues long: 8-amino-7-oxononanoate synthase (391 aa).

Substrate is bound at residue arginine 19. 106–107 (GY) contributes to the pyridoxal 5'-phosphate binding site. Residue histidine 131 participates in substrate binding. Pyridoxal 5'-phosphate-binding residues include serine 178, histidine 206, and threonine 234. An N6-(pyridoxal phosphate)lysine modification is found at lysine 237. Substrate is bound at residue threonine 353.

This sequence belongs to the class-II pyridoxal-phosphate-dependent aminotransferase family. BioF subfamily. In terms of assembly, homodimer. Requires pyridoxal 5'-phosphate as cofactor.

It carries out the reaction 6-carboxyhexanoyl-[ACP] + L-alanine + H(+) = (8S)-8-amino-7-oxononanoate + holo-[ACP] + CO2. The protein operates within cofactor biosynthesis; biotin biosynthesis. Catalyzes the decarboxylative condensation of pimeloyl-[acyl-carrier protein] and L-alanine to produce 8-amino-7-oxononanoate (AON), [acyl-carrier protein], and carbon dioxide. This chain is 8-amino-7-oxononanoate synthase, found in Pelobacter propionicus (strain DSM 2379 / NBRC 103807 / OttBd1).